A 165-amino-acid polypeptide reads, in one-letter code: Small ribosomal subunit protein uS5 (165 aa).

An S5 DRBM domain is found at 10 to 73; it reads QIEKLISLNR…TSARKNLRFV (64 aa).

This sequence belongs to the universal ribosomal protein uS5 family. In terms of assembly, part of the 30S ribosomal subunit. Contacts proteins S4 and S8.

Functionally, with S4 and S12 plays an important role in translational accuracy. Located at the back of the 30S subunit body where it stabilizes the conformation of the head with respect to the body. This Borreliella afzelii (strain PKo) (Borrelia afzelii) protein is Small ribosomal subunit protein uS5.